A 206-amino-acid polypeptide reads, in one-letter code: FMN-dependent NADH:quinone oxidoreductase 2 (206 aa).

An FMN-binding site is contributed by Ser-10.

It belongs to the azoreductase type 1 family. As to quaternary structure, homodimer. Requires FMN as cofactor.

The enzyme catalyses 2 a quinone + NADH + H(+) = 2 a 1,4-benzosemiquinone + NAD(+). It catalyses the reaction N,N-dimethyl-1,4-phenylenediamine + anthranilate + 2 NAD(+) = 2-(4-dimethylaminophenyl)diazenylbenzoate + 2 NADH + 2 H(+). Its function is as follows. Quinone reductase that provides resistance to thiol-specific stress caused by electrophilic quinones. Functionally, also exhibits azoreductase activity. Catalyzes the reductive cleavage of the azo bond in aromatic azo compounds to the corresponding amines. In Rhizobium etli (strain ATCC 51251 / DSM 11541 / JCM 21823 / NBRC 15573 / CFN 42), this protein is FMN-dependent NADH:quinone oxidoreductase 2.